A 1141-amino-acid chain; its full sequence is DNA polymerase 120R (1141 aa).

It belongs to the DNA polymerase type-B family.

It carries out the reaction DNA(n) + a 2'-deoxyribonucleoside 5'-triphosphate = DNA(n+1) + diphosphate. Functionally, DNA-directed DNA polymerase involved in viral DNA replication. This chain is DNA polymerase 120R, found in Invertebrate iridescent virus 3 (IIV-3).